Here is a 161-residue protein sequence, read N- to C-terminus: Allophycocyanin alpha chain (161 aa).

N71 is subject to N4-methylasparagine. Residue C81 participates in (2R,3E)-phycocyanobilin binding.

This sequence belongs to the phycobiliprotein family. In terms of assembly, heterodimer of an alpha and a beta chain. Contains one covalently linked phycocyanobilin chromophore.

Its subcellular location is the cellular thylakoid membrane. Light-harvesting photosynthetic bile pigment-protein from the phycobiliprotein complex. Allophycocyanin has a maximum absorption at approximately 650 nanometers. In Synechocystis sp. (strain PCC 6714) (Aphanocapsa sp. (strain PCC 6714)), this protein is Allophycocyanin alpha chain (apcA).